The primary structure comprises 205 residues: Putative 3-methyladenine DNA glycosylase (205 aa).

It belongs to the DNA glycosylase MPG family.

The polypeptide is Putative 3-methyladenine DNA glycosylase (Clostridium acetobutylicum (strain ATCC 824 / DSM 792 / JCM 1419 / IAM 19013 / LMG 5710 / NBRC 13948 / NRRL B-527 / VKM B-1787 / 2291 / W)).